The following is a 67-amino-acid chain: Large ribosomal subunit protein bL35 (67 aa).

A compositionally biased stretch (basic residues) spans methionine 1–leucine 32. The interval methionine 1 to serine 54 is disordered.

It belongs to the bacterial ribosomal protein bL35 family.

The protein is Large ribosomal subunit protein bL35 of Elusimicrobium minutum (strain Pei191).